Consider the following 345-residue polypeptide: uncharacterized protein (345 aa).

8 helical membrane passes run 9 to 31, 84 to 103, 116 to 138, 148 to 170, 182 to 204, 269 to 286, 291 to 308, and 313 to 335; these read VVAFSIVLSALLCSISLLQAAFV, TLVAILGTGLSAPLLLTYLL, YFSLFLCALNFEGVRLFLPILYT, VPMQIVMFFRSLALLALFASGIF, VVFVLCTVAFLISRYTTIHTIHA, WFFWTTAVLSALSYGVLG, ISHYYIAAAALPFVIAGY, and HGLTWSACIVGLFLLNTASVFFI.

It localises to the cell membrane. This is an uncharacterized protein from Treponema pallidum (strain Nichols).